Reading from the N-terminus, the 162-residue chain is General odorant-binding protein 2 (162 aa).

A signal peptide spans 1–18 (MTSKSCLLLVAMVTLTTS). Cystine bridges form between Cys-40-Cys-75, Cys-71-Cys-129, and Cys-118-Cys-138.

The protein belongs to the PBP/GOBP family. In terms of tissue distribution, antenna.

Functionally, present in the aqueous fluid surrounding olfactory sensory dendrites and are thought to aid in the capture and transport of hydrophobic odorants into and through this fluid. The polypeptide is General odorant-binding protein 2 (Heliothis virescens (Tobacco budworm moth)).